The primary structure comprises 407 residues: Enolase-binding protein (407 aa).

The signal sequence occupies residues 1-24; the sequence is MALGNALYPLTATVFLCVVGFATS. Topologically, residues 25-366 are extracellular; the sequence is SNENSRFLIN…FGQAYPGFRN (342 aa). N-linked (GlcNAc...) asparagine glycosylation is found at Asn52, Asn78, Asn161, and Asn250. A helical transmembrane segment spans residues 367–387; the sequence is VAIGAAILFFSVLGVAIIDMI. At 388–407 the chain is on the cytoplasmic side; sequence RRTIANRRAKRLHLGKYSRT.

(Microbial infection) Interacts with ENO/enolase from parasites P.berghei and P.falciparum. As to expression, expressed in the female midgut epithelium.

The protein resides in the cell membrane. Its function is as follows. (Microbial infection) Acts as a receptor for ENO/enolase from parasites P.berghei and P.falciparum. The interaction is involved in the invasion of the mosquito midgut by P.berghei ookinete, but is dispensable for P.falciparum ookinete invasion. The polypeptide is Enolase-binding protein (Anopheles gambiae (African malaria mosquito)).